The chain runs to 245 residues: Farnesol dehydrogenase (245 aa).

Residues 11–40 (VTGASSGIGAAITTDLAKAGMVVVGLARRV) and D64 each bind NAD(+). Residue S145 coordinates substrate. The Proton acceptor role is filled by Y160. K164 contributes to the NAD(+) binding site.

Belongs to the short-chain dehydrogenases/reductases (SDR) family. Homodimer. Highly expressed level in the midgut and brain in adult females, and at lower level in the abdominal and thoracic ganglia. High levels are detected in corpora allata (CA), Malpighian tubules and fat body.

The catalysed reaction is (2E,6E)-farnesol + NADP(+) = (2E,6E)-farnesal + NADPH + H(+). Its function is as follows. Mediates oxidation of farnesol into farnesal, a precursor of juvenile hormone in the corpora allata (CA), the glands that synthesize juvenile hormone. Able to oxidize C(10) to C(15) isoprenoid and aliphatic alcohols. The protein is Farnesol dehydrogenase of Aedes aegypti (Yellowfever mosquito).